A 296-amino-acid chain; its full sequence is Glycine--tRNA ligase alpha subunit (296 aa).

The protein belongs to the class-II aminoacyl-tRNA synthetase family. Tetramer of two alpha and two beta subunits.

The protein localises to the cytoplasm. The enzyme catalyses tRNA(Gly) + glycine + ATP = glycyl-tRNA(Gly) + AMP + diphosphate. The sequence is that of Glycine--tRNA ligase alpha subunit from Polynucleobacter necessarius subsp. necessarius (strain STIR1).